A 274-amino-acid polypeptide reads, in one-letter code: Rhamnulose-1-phosphate aldolase (274 aa).

Residue Glu-117 is part of the active site. The Zn(2+) site is built by His-141, His-143, and His-212.

Belongs to the aldolase class II family. RhaD subfamily. As to quaternary structure, homotetramer. Zn(2+) is required as a cofactor.

Its subcellular location is the cytoplasm. It catalyses the reaction L-rhamnulose 1-phosphate = (S)-lactaldehyde + dihydroxyacetone phosphate. The protein operates within carbohydrate degradation; L-rhamnose degradation; glycerone phosphate from L-rhamnose: step 3/3. Catalyzes the reversible cleavage of L-rhamnulose-1-phosphate to dihydroxyacetone phosphate (DHAP) and L-lactaldehyde. The protein is Rhamnulose-1-phosphate aldolase of Yersinia pestis.